The following is a 163-amino-acid chain: MSNPEPDDSNNRIVAVTLDEESIGRSGPDIEHERAIAIYDLVEKNLFAPEGAGEGPFTLHIGITGNRLMFDIRREDGAPVITHLLSLTPFRRIVKDYFMICDSYYQAIRTATPDKIEAIDMGRRGIHDEGSRTLQERLAGKVRIDFETARRLFTLISVLHWKG.

The protein belongs to the UPF0262 family.

The sequence is that of UPF0262 protein RPA4530 from Rhodopseudomonas palustris (strain ATCC BAA-98 / CGA009).